Consider the following 463-residue polypeptide: MKQQAKSRKPQQPEYIFQVETLSHEGRGIAHYGSHPDHPADKHGKKVFIRYALPGETVKAQITHEAKRLEEAEMVALLAEPSANRVEAVCPHYGICGGCSMQHIHPDEQICLKQNVLQSHLQHFAGIQPEQWLEPIRSLQSDYRRRARIGVRYLPKQDRLILGFREHHSNRLTSIHTCSVLDKKLSDSLPELRNLLQSLKGKAHIGHVELAKGDYETSLLVRHIEKLNNADVNQLRQFALHKGWQLYLQPKGPESLRRIDEEQGAMRLHYALNAFDVNFAFSPLDFTQVNATVNEQMVQLACELLQLQQGERVLDLFCGLGNFSLPLARCVGAKGQVVGVEASEEMVQRATDNAKRNNLVQASFFSQDLTKDFSHHSWANQGFDALLIDPPRAGAYEIMQYVPNFGAKRIVYVSCNPATLARDAGVLVQHGYQLKKAAVMDMFTHTEHVESIALFEKIQEIND.

Residues 6–76 enclose the TRAM domain; it reads KSRKPQQPEY…KRLEEAEMVA (71 aa). Residues cysteine 90, cysteine 96, cysteine 99, and cysteine 178 each coordinate [4Fe-4S] cluster. 6 residues coordinate S-adenosyl-L-methionine: glutamine 288, phenylalanine 317, asparagine 322, glutamate 341, aspartate 368, and aspartate 389. Cysteine 415 acts as the Nucleophile in catalysis.

It belongs to the class I-like SAM-binding methyltransferase superfamily. RNA M5U methyltransferase family. RlmD subfamily.

It catalyses the reaction uridine(1939) in 23S rRNA + S-adenosyl-L-methionine = 5-methyluridine(1939) in 23S rRNA + S-adenosyl-L-homocysteine + H(+). Its function is as follows. Catalyzes the formation of 5-methyl-uridine at position 1939 (m5U1939) in 23S rRNA. This chain is 23S rRNA (uracil(1939)-C(5))-methyltransferase RlmD, found in Acinetobacter baumannii (strain ACICU).